The primary structure comprises 1033 residues: uncharacterized protein (1033 aa).

This is an uncharacterized protein from Mycoplasma pneumoniae (strain ATCC 29342 / M129 / Subtype 1) (Mycoplasmoides pneumoniae).